The primary structure comprises 452 residues: Cysteine--tRNA ligase (452 aa).

Cys-27 is a binding site for Zn(2+). Positions 29 to 39 (PTVQDHFHIGH) match the 'HIGH' region motif. Residues Asp-207, His-232, and Glu-236 each contribute to the Zn(2+) site. The 'KMSKS' region signature appears at 265–269 (KMSKS). Lys-268 lines the ATP pocket.

The protein belongs to the class-I aminoacyl-tRNA synthetase family. The cofactor is Zn(2+).

The protein resides in the cytoplasm. It catalyses the reaction tRNA(Cys) + L-cysteine + ATP = L-cysteinyl-tRNA(Cys) + AMP + diphosphate. The chain is Cysteine--tRNA ligase from Thermoplasma acidophilum (strain ATCC 25905 / DSM 1728 / JCM 9062 / NBRC 15155 / AMRC-C165).